The chain runs to 362 residues: tRNA 2-selenouridine synthase (362 aa).

In terms of domain architecture, Rhodanese spans 12–135; sequence FLNDTPLLDV…LRRFLIDEME (124 aa). Catalysis depends on cysteine 95, which acts as the S-selanylcysteine intermediate.

The protein belongs to the SelU family. Monomer.

The enzyme catalyses 5-methylaminomethyl-2-thiouridine(34) in tRNA + selenophosphate + (2E)-geranyl diphosphate + H2O + H(+) = 5-methylaminomethyl-2-selenouridine(34) in tRNA + (2E)-thiogeraniol + phosphate + diphosphate. It catalyses the reaction 5-methylaminomethyl-2-thiouridine(34) in tRNA + (2E)-geranyl diphosphate = 5-methylaminomethyl-S-(2E)-geranyl-thiouridine(34) in tRNA + diphosphate. The catalysed reaction is 5-methylaminomethyl-S-(2E)-geranyl-thiouridine(34) in tRNA + selenophosphate + H(+) = 5-methylaminomethyl-2-(Se-phospho)selenouridine(34) in tRNA + (2E)-thiogeraniol. It carries out the reaction 5-methylaminomethyl-2-(Se-phospho)selenouridine(34) in tRNA + H2O = 5-methylaminomethyl-2-selenouridine(34) in tRNA + phosphate. Involved in the post-transcriptional modification of the uridine at the wobble position (U34) of tRNA(Lys), tRNA(Glu) and tRNA(Gln). Catalyzes the conversion of 2-thiouridine (S2U-RNA) to 2-selenouridine (Se2U-RNA). Acts in a two-step process involving geranylation of 2-thiouridine (S2U) to S-geranyl-2-thiouridine (geS2U) and subsequent selenation of the latter derivative to 2-selenouridine (Se2U) in the tRNA chain. This chain is tRNA 2-selenouridine synthase, found in Alcanivorax borkumensis (strain ATCC 700651 / DSM 11573 / NCIMB 13689 / SK2).